The chain runs to 58 residues: uncharacterized protein (58 aa).

It localises to the plastid. Its subcellular location is the chloroplast. This is an uncharacterized protein from Porphyra purpurea (Red seaweed).